Consider the following 120-residue polypeptide: MFVLKGYEYFLGFLLACSLVPILSLTASKVLRPSGGGPERRTTYESGMEPIGGAWIQFNIRYYMFALVFVVFDVETVFLYPWAVAFNQLGLLAFVEALIFIAILVVALVYAWRKGALEWS.

3 helical membrane passes run 7–27 (YEYF…SLTA), 64–84 (MFAL…PWAV), and 89–109 (LGLL…VALV).

This sequence belongs to the complex I subunit 3 family. NDH-1 can be composed of about 15 different subunits; different subcomplexes with different compositions have been identified which probably have different functions.

It is found in the cellular thylakoid membrane. It catalyses the reaction a plastoquinone + NADH + (n+1) H(+)(in) = a plastoquinol + NAD(+) + n H(+)(out). The enzyme catalyses a plastoquinone + NADPH + (n+1) H(+)(in) = a plastoquinol + NADP(+) + n H(+)(out). In terms of biological role, NDH-1 shuttles electrons from an unknown electron donor, via FMN and iron-sulfur (Fe-S) centers, to quinones in the respiratory and/or the photosynthetic chain. The immediate electron acceptor for the enzyme in this species is believed to be plastoquinone. Couples the redox reaction to proton translocation, and thus conserves the redox energy in a proton gradient. Cyanobacterial NDH-1 also plays a role in inorganic carbon-concentration. The protein is NAD(P)H-quinone oxidoreductase subunit 3 of Microcystis aeruginosa (strain NIES-843 / IAM M-2473).